The primary structure comprises 156 residues: Large ribosomal subunit protein uL15 (156 aa).

Positions 25–49 (RGIGCGKGKTSGRGHKGQKARSGTS) are disordered. Residues 34-43 (TSGRGHKGQK) show a composition bias toward basic residues.

It belongs to the universal ribosomal protein uL15 family. As to quaternary structure, part of the 50S ribosomal subunit.

Its function is as follows. Binds to the 23S rRNA. This chain is Large ribosomal subunit protein uL15, found in Wolbachia sp. subsp. Brugia malayi (strain TRS).